Reading from the N-terminus, the 119-residue chain is UPF0102 protein PM0647 (119 aa).

Belongs to the UPF0102 family.

The protein is UPF0102 protein PM0647 of Pasteurella multocida (strain Pm70).